A 635-amino-acid chain; its full sequence is Chaperone protein HtpG (635 aa).

An a; substrate-binding region spans residues 1–346 (MSQTTTNSAS…SADLPLNVSR (346 aa)). Residues 347-563 (EILQESRDVR…QNELSPHLLR (217 aa)) are b. Positions 564 to 635 (MLKAAGQEAP…KRLNGLLLKA (72 aa)) are c.

The protein belongs to the heat shock protein 90 family. As to quaternary structure, homodimer.

It is found in the cytoplasm. Its function is as follows. Molecular chaperone. Has ATPase activity. This Bordetella parapertussis (strain 12822 / ATCC BAA-587 / NCTC 13253) protein is Chaperone protein HtpG.